Reading from the N-terminus, the 423-residue chain is Glycine amidinotransferase, mitochondrial (423 aa).

A mitochondrion-targeting transit peptide spans 1-43 (MLRVRCLRGGSRGAEAVHYIGSRLGGSLTGWVQRTFQSTQAAT). Residues Ser46 and Ser49 each carry the phosphoserine modification. Asp170 lines the arginine pocket. Catalysis depends on residues Asp254 and His303. The arginine site is built by Asp305, Arg322, Ser354, and Ser355. Residue Lys385 is modified to N6-acetyllysine. Cys407 serves as the catalytic Amidino-cysteine intermediate.

The protein belongs to the amidinotransferase family. As to quaternary structure, homodimer. Highly expressed in the kidney and pancreas, especially in the proximal tubules of the kidney, and alpha cells of the pancreatic islets (at protein level). Moderately expressed in liver hepatocytes (at protein level). Expressed in the kidney, pancreas, liver, colon, ileum, jejunum, heart and skeletal muscle. In reproductive tissues, expressed in the testis, epididymis, ovary, oviduct and uterus. Expressed throughout the brain in neurons, astrocytes and oligodendrocytes. In 12.5 dpc embryos, it is expressed in the middle part of the somites, hepatic primordium and wall of the dorsal aorta. Expressed in 15.5 dpc embryos in isolated cells throughout the central nervous system, skeletal muscles, gonad primordia, caudal somites, liver and pancreas, but not in the choroid plexus, root ganglia or kidney. Expressed in skeletal muscle, kidney, pancreas, central nervous system, liver and intestine epithelial cells, but not in epidermis, dermis, olfactory epithelium, trachea, lung, stomach or heart in 18.5 dpc embryos.

The protein localises to the mitochondrion inner membrane. It catalyses the reaction L-arginine + glycine = guanidinoacetate + L-ornithine. It carries out the reaction 4-aminobutanoate + L-arginine = 4-guanidinobutanoate + L-ornithine. The enzyme catalyses beta-alanine + L-arginine = 3-guanidinopropanoate + L-ornithine. The catalysed reaction is taurine + L-arginine = taurocyamine + L-ornithine. Its pathway is amine and polyamine biosynthesis; creatine biosynthesis; creatine from L-arginine and glycine: step 1/2. In terms of biological role, transamidinase that catalyzes the transfer of the amidino group of L-arginine onto the amino moiety of acceptor metabolites such as glycine, beta-alanine, gamma-aminobutyric acid (GABA) and taurine yielding the corresponding guanidine derivatives. Catalyzes the rate-limiting step of creatine biosynthesis, namely the transfer of the amidino group from L-arginine to glycine to generate guanidinoacetate, which is then methylated by GAMT to form creatine. Provides creatine as a source for ATP generation in tissues with high energy demands, in particular skeletal muscle, heart and brain. This is Glycine amidinotransferase, mitochondrial (Gatm) from Rattus norvegicus (Rat).